The primary structure comprises 211 residues: Thiamine-phosphate synthase (211 aa).

Residues 37–41 and N69 each bind 4-amino-2-methyl-5-(diphosphooxymethyl)pyrimidine; that span reads QLREK. Mg(2+) contacts are provided by D70 and E89. S108 contacts 4-amino-2-methyl-5-(diphosphooxymethyl)pyrimidine. 134-136 contacts 2-[(2R,5Z)-2-carboxy-4-methylthiazol-5(2H)-ylidene]ethyl phosphate; that stretch reads TTT. 4-amino-2-methyl-5-(diphosphooxymethyl)pyrimidine is bound at residue K137. Residues G163 and 183–184 contribute to the 2-[(2R,5Z)-2-carboxy-4-methylthiazol-5(2H)-ylidene]ethyl phosphate site; that span reads VS.

It belongs to the thiamine-phosphate synthase family. The cofactor is Mg(2+).

The catalysed reaction is 2-[(2R,5Z)-2-carboxy-4-methylthiazol-5(2H)-ylidene]ethyl phosphate + 4-amino-2-methyl-5-(diphosphooxymethyl)pyrimidine + 2 H(+) = thiamine phosphate + CO2 + diphosphate. It carries out the reaction 2-(2-carboxy-4-methylthiazol-5-yl)ethyl phosphate + 4-amino-2-methyl-5-(diphosphooxymethyl)pyrimidine + 2 H(+) = thiamine phosphate + CO2 + diphosphate. The enzyme catalyses 4-methyl-5-(2-phosphooxyethyl)-thiazole + 4-amino-2-methyl-5-(diphosphooxymethyl)pyrimidine + H(+) = thiamine phosphate + diphosphate. It participates in cofactor biosynthesis; thiamine diphosphate biosynthesis; thiamine phosphate from 4-amino-2-methyl-5-diphosphomethylpyrimidine and 4-methyl-5-(2-phosphoethyl)-thiazole: step 1/1. Condenses 4-methyl-5-(beta-hydroxyethyl)thiazole monophosphate (THZ-P) and 2-methyl-4-amino-5-hydroxymethyl pyrimidine pyrophosphate (HMP-PP) to form thiamine monophosphate (TMP). This chain is Thiamine-phosphate synthase, found in Enterococcus faecalis (strain ATCC 700802 / V583).